The sequence spans 263 residues: uncharacterized protein (263 aa).

The 140-residue stretch at 107–246 folds into the DOD-type homing endonuclease domain; sequence ILGVLNGDGS…CCSFLEKLGI (140 aa).

This is an uncharacterized protein from Methanocaldococcus jannaschii (strain ATCC 43067 / DSM 2661 / JAL-1 / JCM 10045 / NBRC 100440) (Methanococcus jannaschii).